The chain runs to 310 residues: tRNA uridine(34) hydroxylase (310 aa).

Residues 124 to 218 (SDPEVLLIDT…YFEEVPQEES (95 aa)) form the Rhodanese domain. Cys-178 serves as the catalytic Cysteine persulfide intermediate.

This sequence belongs to the TrhO family.

The catalysed reaction is uridine(34) in tRNA + AH2 + O2 = 5-hydroxyuridine(34) in tRNA + A + H2O. Catalyzes oxygen-dependent 5-hydroxyuridine (ho5U) modification at position 34 in tRNAs. The chain is tRNA uridine(34) hydroxylase from Pseudomonas putida (strain W619).